The following is a 230-amino-acid chain: Voltage-gated hydrogen channel 1 (230 aa).

The Cytoplasmic segment spans residues 1 to 58; sequence MAGCLRHFTSVGDDTKKREWKQEDVEVAYEEPLKNTPHPFIASYSFRGALKWLLSSHK. The helical transmembrane segment at 59–79 threads the bilayer; that stretch reads FQIVIICLVILDALFVLVEVL. Topologically, residues 80-96 are extracellular; it reads LDLELLAEKVDHIIPEI. Residues 97-119 form a helical membrane-spanning segment; the sequence is FHYLSISVLTFFILEIAGKLYAF. The Cytoplasmic segment spans residues 120-127; sequence RLEFFHHK. Residues 128–148 form a helical membrane-spanning segment; sequence FEVFDAAIVVISFIIDIVYIS. Topologically, residues 149 to 155 are extracellular; the sequence is REDIFNA. Residues 156-176 traverse the membrane as a helical segment; the sequence is VGLLILLRLWRVARIVNGVIV. Topologically, residues 177 to 230 are cytoplasmic; that stretch reads SVKTRAEEKMHKLKEQKGSLLEKVAQLEQQCAQQEQEIGRLHKLLQEHNVFPAS. Positions 178–225 form a coiled coil; it reads VKTRAEEKMHKLKEQKGSLLEKVAQLEQQCAQQEQEIGRLHKLLQEHN.

It belongs to the hydrogen channel family. In terms of assembly, homodimer.

The protein resides in the membrane. It localises to the cell membrane. Mediates the voltage-dependent proton permeability of excitable membranes. Forms a proton-selective channel through which protons may pass in accordance with their electrochemical gradient. The sequence is that of Voltage-gated hydrogen channel 1 (hvcn1) from Xenopus laevis (African clawed frog).